Consider the following 318-residue polypeptide: Aspartate carbamoyltransferase catalytic subunit (318 aa).

Carbamoyl phosphate is bound by residues R67 and T68. K95 lines the L-aspartate pocket. Residues R117, H145, and Q148 each contribute to the carbamoyl phosphate site. R178 and R236 together coordinate L-aspartate. Carbamoyl phosphate-binding residues include G277 and P278.

The protein belongs to the aspartate/ornithine carbamoyltransferase superfamily. ATCase family. Heterododecamer (2C3:3R2) of six catalytic PyrB chains organized as two trimers (C3), and six regulatory PyrI chains organized as three dimers (R2).

It catalyses the reaction carbamoyl phosphate + L-aspartate = N-carbamoyl-L-aspartate + phosphate + H(+). The protein operates within pyrimidine metabolism; UMP biosynthesis via de novo pathway; (S)-dihydroorotate from bicarbonate: step 2/3. Functionally, catalyzes the condensation of carbamoyl phosphate and aspartate to form carbamoyl aspartate and inorganic phosphate, the committed step in the de novo pyrimidine nucleotide biosynthesis pathway. The protein is Aspartate carbamoyltransferase catalytic subunit of Roseiflexus castenholzii (strain DSM 13941 / HLO8).